Reading from the N-terminus, the 816-residue chain is Lon protease (816 aa).

The region spanning 40 to 244 is the Lon N-terminal domain; sequence VPLIAVPSHP…KVLELLYEEL (205 aa). 398 to 405 is an ATP binding site; sequence GPPGVGKT. The Lon proteolytic domain occupies 636 to 816; it reads AMSPGMVMGL…SMKEVIKLLF (181 aa). Active-site residues include Ser724 and Lys767.

This sequence belongs to the peptidase S16 family. Homohexamer. Organized in a ring with a central cavity.

It localises to the cytoplasm. The enzyme catalyses Hydrolysis of proteins in presence of ATP.. Its function is as follows. ATP-dependent serine protease that mediates the selective degradation of mutant and abnormal proteins as well as certain short-lived regulatory proteins. Required for cellular homeostasis and for survival from DNA damage and developmental changes induced by stress. Degrades polypeptides processively to yield small peptide fragments that are 5 to 10 amino acids long. Binds to DNA in a double-stranded, site-specific manner. This chain is Lon protease, found in Borrelia duttonii (strain Ly).